Consider the following 183-residue polypeptide: Ribosome rescue factor SmrB (183 aa).

In terms of domain architecture, Smr spans 98 to 173 (LDLHGLTQMQ…GDAALLVLIE (76 aa)).

This sequence belongs to the SmrB family. Associates with collided ribosomes, but not with correctly translating polysomes.

Acts as a ribosome collision sensor. Detects stalled/collided disomes (pairs of ribosomes where the leading ribosome is stalled and a second ribosome has collided with it) and endonucleolytically cleaves mRNA at the 5' boundary of the stalled ribosome. Stalled/collided disomes form a new interface (primarily via the 30S subunits) that binds SmrB. Cleaved mRNA becomes available for tmRNA ligation, leading to ribosomal subunit dissociation and rescue of stalled ribosomes. This is Ribosome rescue factor SmrB from Enterobacter sp. (strain 638).